The primary structure comprises 177 residues: Large ribosomal subunit protein uL6 (177 aa).

Belongs to the universal ribosomal protein uL6 family. As to quaternary structure, part of the 50S ribosomal subunit.

Its function is as follows. This protein binds to the 23S rRNA, and is important in its secondary structure. It is located near the subunit interface in the base of the L7/L12 stalk, and near the tRNA binding site of the peptidyltransferase center. This Methylobacterium nodulans (strain LMG 21967 / CNCM I-2342 / ORS 2060) protein is Large ribosomal subunit protein uL6.